The chain runs to 86 residues: Small ribosomal subunit protein uS17 (86 aa).

The protein belongs to the universal ribosomal protein uS17 family. Part of the 30S ribosomal subunit.

Functionally, one of the primary rRNA binding proteins, it binds specifically to the 5'-end of 16S ribosomal RNA. The polypeptide is Small ribosomal subunit protein uS17 (Rhizorhabdus wittichii (strain DSM 6014 / CCUG 31198 / JCM 15750 / NBRC 105917 / EY 4224 / RW1) (Sphingomonas wittichii)).